The chain runs to 1162 residues: Spike glycoprotein (1162 aa).

The first 18 residues, 1–18 (MLVTPLLLVTLLCALCSA), serve as a signal peptide directing secretion. Topologically, residues 19–1095 (ALYDSSSYVY…LKTYIKWPWY (1077 aa)) are extracellular. Residues asparagine 51, asparagine 77, asparagine 103, asparagine 144, asparagine 163, asparagine 178, asparagine 212, asparagine 237, asparagine 247, asparagine 264, asparagine 271, asparagine 276, asparagine 306, asparagine 425, asparagine 447, asparagine 513, asparagine 530, asparagine 579, asparagine 591, asparagine 669, asparagine 676, and asparagine 714 are each glycosylated (N-linked (GlcNAc...) asparagine; by host). The tract at residues 769–874 (IPFATQLQAR…QVDRLITGRL (106 aa)) is heptad repeat 1 (HR1). Positions 822 to 866 (QDVVNKQSAILTETMASLNKNFGAISSVIQEIYLQLDAIQANAQV) form a coiled coil. Residues asparagine 947, asparagine 960, asparagine 979, asparagine 1014, asparagine 1051, asparagine 1058, and asparagine 1074 are each glycosylated (N-linked (GlcNAc...) asparagine; by host). Residues 1024 to 1105 (NDDFDFDDEL…VWLAIAFATI (82 aa)) form a heptad repeat 2 (HR2) region. Residues 1055-1083 (PVLNITYDIDKIEEVIKGLNDSLIDLETL) are a coiled coil. A helical membrane pass occupies residues 1096 to 1116 (VWLAIAFATIIFILILGWVFF). The Cytoplasmic portion of the chain corresponds to 1117–1162 (MTGCCGCCCGCFGIIPLMSKCGKKSSYYTTFDNDVVTEQYRPKKSV). The Di-lysine motif motif lies at 1159–1162 (KKSV).

It belongs to the gammacoronaviruses spike protein family. Homotrimer; each monomer consists of a S1 and a S2 subunit. The resulting peplomers protrude from the virus surface as spikes. Specific enzymatic cleavages in vivo yield mature proteins. The precursor is processed into S1 and S2 by host cell furin or furin-like protease to yield the mature S1 and S2 proteins. The cleavage site between S1 and S2 requires the optimal sequence [KR]-X-[KR]-R. Additionally, a second cleavage leads to the release of a fusion peptide after viral attachment to host cell receptor.

The protein resides in the virion membrane. Its subcellular location is the host endoplasmic reticulum-Golgi intermediate compartment membrane. Attaches the virion to the host cell membrane by interacting with sialic acids, initiating the infection. In terms of biological role, mediates fusion of the virion and cellular membranes by acting as a class I viral fusion protein. Under the current model, the protein has at least 3 conformational states: pre-fusion native state, pre-hairpin intermediate state, and post-fusion hairpin state. During viral and target cell membrane fusion, the coiled coil regions (heptad repeats) assume a trimer-of-hairpins structure, positioning the fusion peptide in close proximity to the C-terminal region of the ectodomain. The formation of this structure appears to drive apposition and subsequent fusion of viral and target cell membranes. Functionally, acts as a viral fusion peptide after S2 cleavage occurring upon virus endocytosis. This is Spike glycoprotein from Avian infectious bronchitis virus (strain KB8523) (IBV).